Here is a 663-residue protein sequence, read N- to C-terminus: Zinc finger protein 44 (663 aa).

Residues 52-138 (VAFEDVAVNF…GETLSQIRNS (87 aa)) enclose the KRAB domain. Residues 189–211 (YTHKQCGKGLSYRHSFQTCERPH) form a C2H2-type 1; atypical zinc finger. A C2H2-type 2; degenerate zinc finger spans residues 217–239 (YDCKECGKTFSSPGNLRRHMVVK). 15 consecutive C2H2-type zinc fingers follow at residues 245–267 (YKCE…ERTH), 273–295 (YECK…EKIH), 301–323 (YECK…ERTH), 329–351 (YKCK…ERIH), 357–379 (YTCK…MIMH), 385–407 (HKCK…EGTH), 413–435 (YECK…MMAH), 441–463 (HKCT…ERTH), 469–491 (YECK…ETTH), 497–518 (YKCK…ETTH), 524–546 (YECK…ERTH), 552–574 (YECQ…ERTH), 580–602 (YECK…ERTH), 608–630 (YECK…ERTH), and 636–658 (YECK…KRTH).

It belongs to the krueppel C2H2-type zinc-finger protein family.

It localises to the nucleus. In terms of biological role, may be involved in transcriptional regulation. This is Zinc finger protein 44 (ZNF44) from Homo sapiens (Human).